The chain runs to 205 residues: Recombination protein RecR (205 aa).

The segment at 64-79 (CRRCFNITVDELCPIC) adopts a C4-type zinc-finger fold. Residues 87–182 (TKICVVEEPL…RVTRPARGLP (96 aa)) form the Toprim domain.

The protein belongs to the RecR family.

In terms of biological role, may play a role in DNA repair. It seems to be involved in an RecBC-independent recombinational process of DNA repair. It may act with RecF and RecO. The polypeptide is Recombination protein RecR (Chloroflexus aggregans (strain MD-66 / DSM 9485)).